Here is a 444-residue protein sequence, read N- to C-terminus: F-box/FBD/LRR-repeat protein At5g53840 (444 aa).

Positions 17–63 (EERLSQLPDHLICVILSHLSTKDAVRTSILSTRWRNLWQLVPVLDFD) constitute an F-box domain. 11 LRR repeats span residues 103-123 (YYLT…IDIS), 124-150 (VFTC…KLSR), 151-171 (VTMV…DLDF), 172-197 (VNFT…TIVK), 199-224 (SEDN…RFDR), 226-252 (NGLV…EFIN), 273-299 (NRSM…TIKD), 300-321 (IFHY…LSAV), 322-347 (CSIS…SLKL), 369-396 (VSSL…YFLE), and 398-423 (STIL…HIRQ). An FBD domain is found at 356-408 (EEVMSSTVPPPCLVSSLKFVKLESQLLGCGTELKVARYFLENSTILEKLTLKI).

The polypeptide is F-box/FBD/LRR-repeat protein At5g53840 (Arabidopsis thaliana (Mouse-ear cress)).